A 181-amino-acid chain; its full sequence is Negative modulator of initiation of replication (181 aa).

3 interaction with DNA regions span residues 87–88 (AV), 116–120 (RTRVY), and 150–156 (NTNTGRK).

It belongs to the SeqA family. In terms of assembly, homodimer. Polymerizes to form helical filaments.

It is found in the cytoplasm. Functionally, negative regulator of replication initiation, which contributes to regulation of DNA replication and ensures that replication initiation occurs exactly once per chromosome per cell cycle. Binds to pairs of hemimethylated GATC sequences in the oriC region, thus preventing assembly of replication proteins and re-initiation at newly replicated origins. Repression is relieved when the region becomes fully methylated. This chain is Negative modulator of initiation of replication, found in Shigella dysenteriae serotype 1 (strain Sd197).